The primary structure comprises 226 residues: ATP synthase F(0) complex subunit a (226 aa).

6 consecutive transmembrane segments (helical) span residues 14-34 (ILGI…FSAP), 68-88 (WTLM…LGLL), 97-117 (QLSM…LMGF), 138-158 (IPML…ALAV), 164-184 (ITAG…LSSI), and 193-213 (FTIL…QAYV).

This sequence belongs to the ATPase A chain family. As to quaternary structure, component of the ATP synthase complex composed at least of ATP5F1A/subunit alpha, ATP5F1B/subunit beta, ATP5MC1/subunit c (homooctomer), MT-ATP6/subunit a, MT-ATP8/subunit 8, ATP5ME/subunit e, ATP5MF/subunit f, ATP5MG/subunit g, ATP5MK/subunit k, ATP5MJ/subunit j, ATP5F1C/subunit gamma, ATP5F1D/subunit delta, ATP5F1E/subunit epsilon, ATP5PF/subunit F6, ATP5PB/subunit b, ATP5PD/subunit d, ATP5PO/subunit OSCP. ATP synthase complex consists of a soluble F(1) head domain (subunits alpha(3) and beta(3)) - the catalytic core - and a membrane F(0) domain - the membrane proton channel (subunits c, a, 8, e, f, g, k and j). These two domains are linked by a central stalk (subunits gamma, delta, and epsilon) rotating inside the F1 region and a stationary peripheral stalk (subunits F6, b, d, and OSCP). Interacts with DNAJC30; interaction is direct.

It localises to the mitochondrion inner membrane. The catalysed reaction is H(+)(in) = H(+)(out). Functionally, subunit a, of the mitochondrial membrane ATP synthase complex (F(1)F(0) ATP synthase or Complex V) that produces ATP from ADP in the presence of a proton gradient across the membrane which is generated by electron transport complexes of the respiratory chain. ATP synthase complex consist of a soluble F(1) head domain - the catalytic core - and a membrane F(1) domain - the membrane proton channel. These two domains are linked by a central stalk rotating inside the F(1) region and a stationary peripheral stalk. During catalysis, ATP synthesis in the catalytic domain of F(1) is coupled via a rotary mechanism of the central stalk subunits to proton translocation. With the subunit c (ATP5MC1), forms the proton-conducting channel in the F(0) domain, that contains two crucial half-channels (inlet and outlet) that facilitate proton movement from the mitochondrial intermembrane space (IMS) into the matrix. Protons are taken up via the inlet half-channel and released through the outlet half-channel, following a Grotthuss mechanism. In Tachyglossus aculeatus aculeatus (Southeast Australian short-beaked echidna), this protein is ATP synthase F(0) complex subunit a.